Consider the following 64-residue polypeptide: PYLa/PGLa B (64 aa).

A signal peptide spans 1–20 (MYKQIFLCLIIAALCATIMA). The propeptide occupies 21-35 (EASALADADDDDDKR). At leucine 59 the chain carries Leucine amide. The propeptide occupies 60–64 (GRRDS).

This sequence belongs to the gastrin/cholecystokinin family. Magainin subfamily. Expressed by the skin glands. Synthesized in the stomach and stored in a novel granular multinucleated cell in the gastric mucosa. Stored as active, processed peptides in large granules within the granular gland secretions of the skin.

It is found in the secreted. Functionally, PGLa and PGLa-H display a broad-spectrum of antibacterial activity against a range of Gram-positive and Gram-negative bacteria. PGLa also displays antifungal activity against C.albicans ATCC 14053. PGLa-H shows moderate antibacterial activity against the multidrug-resistant methicillin-resistant S.aureus (MRSA) but exhibits very little hemolytic activity. The sequence is that of PYLa/PGLa B (pgla-b) from Xenopus laevis (African clawed frog).